The chain runs to 116 residues: Large ribosomal subunit protein bL19 (116 aa).

Belongs to the bacterial ribosomal protein bL19 family.

In terms of biological role, this protein is located at the 30S-50S ribosomal subunit interface and may play a role in the structure and function of the aminoacyl-tRNA binding site. This is Large ribosomal subunit protein bL19 from Histophilus somni (strain 129Pt) (Haemophilus somnus).